The following is a 126-amino-acid chain: Tachykinin-3 (126 aa).

An N-terminal signal peptide occupies residues 1–20 (MRSTLLFAVILALSSARSLG). The propeptide occupies 21–83 (AVCEESQEQV…VGPKESPLPQ (63 aa)). Position 95 is a methionine amide (Met-95). The propeptide occupies 99 to 126 (NLQPDTPVDINQENIPSFGTFKYPPSVE). A disordered region spans residues 102 to 126 (PDTPVDINQENIPSFGTFKYPPSVE).

Belongs to the tachykinin family.

It localises to the secreted. Tachykinins are active peptides which excite neurons, evoke behavioral responses, are potent vasodilators and secretagogues, and contract (directly or indirectly) many smooth muscles. Is a critical central regulator of gonadal function. The polypeptide is Tachykinin-3 (TAC3) (Bos taurus (Bovine)).